A 44-amino-acid polypeptide reads, in one-letter code: Keratin-associated protein 20-3 (44 aa).

It belongs to the KRTAP type 20 family. As to quaternary structure, interacts with hair keratins.

Its function is as follows. In the hair cortex, hair keratin intermediate filaments are embedded in an interfilamentous matrix, consisting of hair keratin-associated proteins (KRTAP), which are essential for the formation of a rigid and resistant hair shaft through their extensive disulfide bond cross-linking with abundant cysteine residues of hair keratins. The matrix proteins include the high-sulfur and high-glycine-tyrosine keratins. The sequence is that of Keratin-associated protein 20-3 (KRTAP20-3) from Homo sapiens (Human).